A 502-amino-acid chain; its full sequence is MADKADKMKARLPRGFVDRVPDDLRAAEKMMATIREVYDLYGFEPVETPLVEYTDALGKFLPDQDRPNEGVFSFQDDDEQWLSLRYDLTAPLARYVAENFETLPKPYRSYRNGWVFRNEKPGPGRFRQFMQFDADTVGAPNVSADAEMCMMMADTLERLGIQRGDYAIRVNNRKVLDGVLDAIGLEGEGNAAKRLNVLRAIDKLDKFGPEGVRLLLGKGRLDESGDFTKGAQLPEAAIEKVLAFTAAGGADGAQTIANLQAVVAGNAKGEEGVQELADMQALFFAGGYEGRVKIDPSVVRGLEYYTGPVFEAELLFDVTNEDGQKVVFGSVGGGGRYDGLVSRFRGEPVPATGFSIGVSRLMTALKNLGKLDVSDTVGPVVVLVMDKDTQNLGRYQKMVSDLRKAGIRAEMYVGGSGMKAQMKYADRRAAPCVVIQGSQEREAGEVQIKDLVEGKRLSAEIEDNVTWRESRPAQITVREDGLVDAVREILDAQARDRAEQSK.

The protein belongs to the class-II aminoacyl-tRNA synthetase family. Homodimer.

It localises to the cytoplasm. It catalyses the reaction tRNA(His) + L-histidine + ATP = L-histidyl-tRNA(His) + AMP + diphosphate + H(+). This is Histidine--tRNA ligase from Brucella suis (strain ATCC 23445 / NCTC 10510).